Reading from the N-terminus, the 199-residue chain is DNA repair RAD52-like protein 2, chloroplastic (199 aa).

The transit peptide at 1–40 directs the protein to the chloroplast; sequence MALQVQQTSAAFTISSPSTAAARIKLSPFRTVAVNRGVRC. Ser-41 is modified (N-acetylserine).

It belongs to the RAD52 family. As to expression, expressed in roots and shoots. Expressed at low levels in cauline leaves, flower buds, flowers and siliques.

The protein localises to the plastid. It localises to the chloroplast. Its function is as follows. Involved in double-stranded DNA break repair. This chain is DNA repair RAD52-like protein 2, chloroplastic, found in Arabidopsis thaliana (Mouse-ear cress).